The sequence spans 282 residues: Endochitinase 4 (282 aa).

In terms of domain architecture, GH18 spans 1–282; that stretch reads GAKNGVHPPL…TWSINWDGSK (282 aa). Glu-112 (proton donor) is an active-site residue. N-linked (GlcNAc...) asparagine glycosylation is present at Asn-265.

Belongs to the glycosyl hydrolase 18 family. Chitinase class V subfamily.

Its subcellular location is the secreted. It catalyses the reaction Random endo-hydrolysis of N-acetyl-beta-D-glucosaminide (1-&gt;4)-beta-linkages in chitin and chitodextrins.. Its function is as follows. Secreted chitinase involved in the degradation of chitin, a component of the cell walls of fungi and exoskeletal elements of some animals (including worms and arthropods). Participates in the infection process and directly acts in the penetration process of the host cuticle. The polypeptide is Endochitinase 4 (chi4) (Metarhizium anisopliae (Entomophthora anisopliae)).